Consider the following 336-residue polypeptide: Cellodextrinase A (336 aa).

Glutamate 141 (proton donor) is an active-site residue.

Belongs to the glycosyl hydrolase 5 (cellulase A) family.

The protein localises to the secreted. Its function is as follows. Crystalline cellulose degradation. This Ruminococcus flavefaciens protein is Cellodextrinase A (celA).